A 287-amino-acid chain; its full sequence is Telomere repeat-binding factor 5 (287 aa).

An HTH myb-type domain is found at methionine 1–threonine 62. Residues tryptophan 28–valine 58 constitute a DNA-binding region (H-T-H motif). The disordered stretch occupies residues valine 58–leucine 107. Positions arginine 93 to glycine 103 are enriched in pro residues. The region spanning asparagine 119–aspartate 193 is the H15 domain. The stretch at alanine 233–lysine 259 forms a coiled coil.

Belongs to the histone H1/H5 family. SMH subfamily.

It localises to the nucleus. The protein localises to the chromosome. Functionally, binds preferentially double-stranded telomeric repeats. The sequence is that of Telomere repeat-binding factor 5 from Arabidopsis thaliana (Mouse-ear cress).